The sequence spans 288 residues: Light-independent protochlorophyllide reductase iron-sulfur ATP-binding protein (288 aa).

Residues 10–15 and Lys39 each bind ATP; that span reads GIGKST. Ser14 is a Mg(2+) binding site. [4Fe-4S] cluster contacts are provided by Cys95 and Cys129. Residue 180–181 participates in ATP binding; sequence NR.

The protein belongs to the NifH/BchL/ChlL family. In terms of assembly, homodimer. Protochlorophyllide reductase is composed of three subunits; ChlL, ChlN and ChlB. [4Fe-4S] cluster is required as a cofactor.

It carries out the reaction chlorophyllide a + oxidized 2[4Fe-4S]-[ferredoxin] + 2 ADP + 2 phosphate = protochlorophyllide a + reduced 2[4Fe-4S]-[ferredoxin] + 2 ATP + 2 H2O. It functions in the pathway porphyrin-containing compound metabolism; chlorophyll biosynthesis (light-independent). In terms of biological role, component of the dark-operative protochlorophyllide reductase (DPOR) that uses Mg-ATP and reduced ferredoxin to reduce ring D of protochlorophyllide (Pchlide) to form chlorophyllide a (Chlide). This reaction is light-independent. The L component serves as a unique electron donor to the NB-component of the complex, and binds Mg-ATP. This Nostoc sp. (strain PCC 7120 / SAG 25.82 / UTEX 2576) protein is Light-independent protochlorophyllide reductase iron-sulfur ATP-binding protein.